Consider the following 260-residue polypeptide: Thrombin-like enzyme flavoxobin (260 aa).

An N-terminal signal peptide occupies residues Met1–Ala18. Residues Gln19–Leu24 constitute a propeptide that is removed on maturation. Residues Val25 to Ala251 enclose the Peptidase S1 domain. Cystine bridges form between Cys31-Cys165, Cys52-Cys68, Cys100-Cys258, Cys144-Cys212, Cys176-Cys191, and Cys202-Cys227. Catalysis depends on charge relay system residues His67 and Asp112. Residue Ser206 is the Charge relay system of the active site.

This sequence belongs to the peptidase S1 family. Snake venom subfamily. Monomer. In terms of tissue distribution, expressed by the venom gland.

It is found in the secreted. It catalyses the reaction Selective cleavage of Arg-|-Xaa bond in fibrinogen, to form fibrin, and release fibrinopeptide A. The specificity of further degradation of fibrinogen varies with species origin of the enzyme.. Inhibited by alpha(2)-macroglobulin, diisopropylfluorophosphate (DFP) and PMSF. Low inhibition by tosyl-L-lysine chloromethyl ketone. In terms of biological role, thrombin-like snake venom serine protease that clots fibrinogen (FGA) by releasing fibrinopeptide A. According to PubMed:8585090, only cleaves rabbit fibrinogen, whereas no specificity is described in PubMed:3910643 (tests done on bovine fibrinogen). Also acts as a C3 convertase that independently cleaves human C3 and kick-starts the complement cascade. Also increases urokinase-type plasminogen activator (PLAU) and plasminogen activator inhibitor (SERPINE1) in cultured bovine pulmonary artery endothelial cells. Dose-dependently inhibits collagen-induced platelet aggregation. In Protobothrops flavoviridis (Habu), this protein is Thrombin-like enzyme flavoxobin (TLF1).